The following is a 297-amino-acid chain: 4,5-DOPA dioxygenase extradiol-like protein (297 aa).

The Zn(2+) site is built by histidine 30, histidine 82, histidine 205, and histidine 263.

Belongs to the DODA-type extradiol aromatic ring-opening dioxygenase family. Zn(2+) serves as cofactor.

The protein localises to the cytoplasm. It is found in the nucleus. Its function is as follows. May be involved in the metabolism of aromatic compounds. The polypeptide is 4,5-DOPA dioxygenase extradiol-like protein (Schizosaccharomyces pombe (strain 972 / ATCC 24843) (Fission yeast)).